The chain runs to 219 residues: MKSHREMLRGIQREAGITQRWIGKESLDRRVMEAMKAVPRHEFVPDEQRPYAYDDAPLAIGCGQTISQPYIVALMTDLLDSTPDDIILEVGTGSGYQAAVLSRLVKKVYTIETIEELAQQAEARLERLGYSNVEVQTADGYFGWPEQAPFDGIMVTAAAPSIPKPLIDQLKPEARLVLPLGAGSPQELMVVTKKENDEIDIHRVLGVSFVPLTGKHEVP.

S67 is an active-site residue.

It belongs to the methyltransferase superfamily. L-isoaspartyl/D-aspartyl protein methyltransferase family.

The protein localises to the cytoplasm. The enzyme catalyses [protein]-L-isoaspartate + S-adenosyl-L-methionine = [protein]-L-isoaspartate alpha-methyl ester + S-adenosyl-L-homocysteine. Functionally, catalyzes the methyl esterification of L-isoaspartyl residues in peptides and proteins that result from spontaneous decomposition of normal L-aspartyl and L-asparaginyl residues. It plays a role in the repair and/or degradation of damaged proteins. The sequence is that of Protein-L-isoaspartate O-methyltransferase 2 from Nitrosococcus oceani (strain ATCC 19707 / BCRC 17464 / JCM 30415 / NCIMB 11848 / C-107).